The chain runs to 102 residues: Small ribosomal subunit protein uS10 (102 aa).

Belongs to the universal ribosomal protein uS10 family. As to quaternary structure, part of the 30S ribosomal subunit.

Functionally, involved in the binding of tRNA to the ribosomes. The protein is Small ribosomal subunit protein uS10 of Leptospira borgpetersenii serovar Hardjo-bovis (strain JB197).